The sequence spans 205 residues: Small ribosomal subunit protein uS4 (205 aa).

Residues 1 to 16 (MSKRESSKYKIDRRMG) are compositionally biased toward basic and acidic residues. The interval 1 to 46 (MSKRESSKYKIDRRMGENIWGRPKSPVNRREYGPGQHGQRRKSKLS) is disordered. Positions 94–157 (SRLDAIVYRA…KQLVSVLESV (64 aa)) constitute an S4 RNA-binding domain.

The protein belongs to the universal ribosomal protein uS4 family. In terms of assembly, part of the 30S ribosomal subunit. Contacts protein S5. The interaction surface between S4 and S5 is involved in control of translational fidelity.

One of the primary rRNA binding proteins, it binds directly to 16S rRNA where it nucleates assembly of the body of the 30S subunit. Functionally, with S5 and S12 plays an important role in translational accuracy. This is Small ribosomal subunit protein uS4 from Sinorhizobium fredii (strain NBRC 101917 / NGR234).